We begin with the raw amino-acid sequence, 130 residues long: Histone H2A.1 (130 aa).

Residues 1 to 21 (MSGGKGKVGSSEKASTSRSAK) form a disordered region. An N-acetylserine modification is found at S2. Residues K5 and K7 each carry the N6-acetyllysine modification. Residue Q105 is modified to N5-methylglutamine. S127 is modified (phosphoserine). Positions 127–128 (SQ) match the [ST]-Q motif motif.

This sequence belongs to the histone H2A family. In terms of assembly, the nucleosome is a histone octamer containing two molecules each of H2A, H2B, H3 and H4 assembled in one H3-H4 heterotetramer and two H2A-H2B heterodimers. The octamer wraps approximately 147 bp of DNA. Post-translationally, phosphorylated to form H2AS128ph (gamma-H2A) in response to DNA double-strand breaks (DSBs) generated by exogenous genotoxic agents and by stalled replication forks. Phosphorylation is dependent on the DNA damage checkpoint kinases MEC1/ATR and TEL1/ATM, spreads on either side of a detected DSB site and may mark the surrounding chromatin for recruitment of proteins required for DNA damage signaling and repair. Gamma-H2A is removed from the DNA prior to the strand invasion-primer extension step of the repair process and subsequently dephosphorylated. Dephosphorylation is necessary for efficient recovery from the DNA damage checkpoint. Acetylated by ESA1 to form H2AK4ac and H2AK7ac.

The protein resides in the nucleus. It localises to the chromosome. Core component of nucleosome which plays a central role in DNA double strand break (DSB) repair. Nucleosomes wrap and compact DNA into chromatin, limiting DNA accessibility to the cellular machineries which require DNA as a template. Histones thereby play a central role in transcription regulation, DNA repair, DNA replication and chromosomal stability. DNA accessibility is regulated via a complex set of post-translational modifications of histones, also called histone code, and nucleosome remodeling. This chain is Histone H2A.1 (HTA1), found in Meyerozyma guilliermondii (strain ATCC 6260 / CBS 566 / DSM 6381 / JCM 1539 / NBRC 10279 / NRRL Y-324) (Yeast).